A 551-amino-acid chain; its full sequence is Glucose-6-phosphate isomerase (551 aa).

D-glucose 6-phosphate is bound by residues 161-162 (GS), 212-217 (SKTFTT), Gln356, Glu360, His391, and Lys516. Glu360 functions as the Proton donor in the catalytic mechanism. Catalysis depends on residues His391 and Lys516.

It belongs to the GPI family. As to quaternary structure, homodimer.

It is found in the cytoplasm. Its subcellular location is the cytosol. The enzyme catalyses alpha-D-glucose 6-phosphate = beta-D-fructose 6-phosphate. It participates in carbohydrate degradation; glycolysis; D-glyceraldehyde 3-phosphate and glycerone phosphate from D-glucose: step 2/4. Functionally, in the cytoplasm, catalyzes the conversion of glucose-6-phosphate to fructose-6-phosphate, the second step in glycolysis, and the reverse reaction during gluconeogenesis. The chain is Glucose-6-phosphate isomerase (gpi1) from Agaricus bisporus (White button mushroom).